The chain runs to 171 residues: S-ribosylhomocysteine lyase (171 aa).

Histidine 54, histidine 58, and cysteine 128 together coordinate Fe cation.

The protein belongs to the LuxS family. In terms of assembly, homodimer. Fe cation serves as cofactor.

The enzyme catalyses S-(5-deoxy-D-ribos-5-yl)-L-homocysteine = (S)-4,5-dihydroxypentane-2,3-dione + L-homocysteine. Functionally, involved in the synthesis of autoinducer 2 (AI-2) which is secreted by bacteria and is used to communicate both the cell density and the metabolic potential of the environment. The regulation of gene expression in response to changes in cell density is called quorum sensing. Catalyzes the transformation of S-ribosylhomocysteine (RHC) to homocysteine (HC) and 4,5-dihydroxy-2,3-pentadione (DPD). This chain is S-ribosylhomocysteine lyase, found in Cronobacter sakazakii (strain ATCC BAA-894) (Enterobacter sakazakii).